Consider the following 104-residue polypeptide: MTQNWIDAACLDDIPEGDVVGVKVNGKEIALYEVEGEIYATDNLCTHGAARMSDGFLEGREIECPLHQGRFDVCTGKALCTPLTKDIKTYPVKIENMRVMLKME.

The region spanning 6–101 (IDAACLDDIP…VKIENMRVML (96 aa)) is the Rieske domain. Positions 45, 47, 64, and 67 each coordinate [2Fe-2S] cluster.

This sequence belongs to the bacterial ring-hydroxylating dioxygenase ferredoxin component family. Ferredoxin NagAb belongs to both the salicylate 5-hydroxylase (S5H) and the naphthalene 1,2-dioxygenase (NDO) multicomponent enzyme systems. The NDO multicomponent enzyme system is composed of an electron transfer component and a dioxygenase component (iron sulfur protein (ISP)). The electron transfer component is composed of a ferredoxin reductase (NagAa) and a ferredoxin (NagAb), and the dioxygenase component is formed by a large alpha subunit (NagAc) and a small beta subunit (NagAd). The S5H multicomponent enzyme system is composed of an electron transfer component and a monooxygenase component. The electron transfer component is composed of a ferredoxin reductase (NagAa) and a ferredoxin (NagAb), and the monooxygenase component is formed by a large subunit (NagG) and a small subunit (NagH). Requires [2Fe-2S] cluster as cofactor.

The protein operates within aromatic compound metabolism; naphthalene degradation. In terms of biological role, component of two multicomponent enzyme systems which are involved in the catabolism of naphthalene. Plays a role as an electron transfer component for both salicylate 5-hydroxylase (S5H) and naphthalene 1,2-dioxygenase (NDO) systems, by transferring electrons to the oxygenase components. This chain is Naphthalene 1,2-dioxygenase/salicylate 5-hydroxylase systems, ferredoxin component, found in Ralstonia sp.